The sequence spans 407 residues: POC1 centriolar protein homolog A (407 aa).

WD repeat units lie at residues 17–56 (GHRD…RAYR), 59–98 (GHKD…ESTV), 101–140 (AHTA…FLFS), 143–182 (QHIN…CVHS), 185–224 (EHGG…LLQH), 227–266 (LHSA…LLYT), and 269–308 (GHQG…VDYG). A disordered region spans residues 317–357 (PATRASSSGTLPEVDPLVPPGRGRSQESMQSHSQEPVSVPQ). Residues 342–357 (QESMQSHSQEPVSVPQ) show a composition bias toward polar residues. Residues 369–397 (QLDVLTQTVSILEQRLTLTEDKLKQCLEN) are a coiled coil.

This sequence belongs to the WD repeat POC1 family. In terms of assembly, interacts with POC1B.

It is found in the cytoplasm. It localises to the cytoskeleton. Its subcellular location is the microtubule organizing center. The protein localises to the centrosome. The protein resides in the centriole. It is found in the cilium basal body. It localises to the spindle pole. Functionally, plays an important role in centriole assembly and/or stability and ciliogenesis. Involved in early steps of centriole duplication, as well as in the later steps of centriole length control. Acts in concert with POC1B to ensure centriole integrity and proper mitotic spindle formation. The sequence is that of POC1 centriolar protein homolog A (POC1A) from Bos taurus (Bovine).